We begin with the raw amino-acid sequence, 403 residues long: Keratin, type I cytoskeletal 19 (403 aa).

The tract at residues 1 to 82 (MTSYSYRQTS…AVSDGLLSGN (82 aa)) is head. Arg7 is modified (omega-N-methylarginine). Phosphoserine is present on residues Ser14 and Ser22. The residue at position 24 (Arg24) is an Asymmetric dimethylarginine; alternate. Arg24 is subject to Omega-N-methylarginine; alternate. Ser27 is modified (phosphoserine). Arg32 bears the Omega-N-methylarginine mark. A phosphoserine mark is found at Ser35 and Ser40. Residues Arg43 and Arg51 each carry the omega-N-methylarginine modification. At Ser57 the chain carries Phosphoserine. Position 64 is an omega-N-methylarginine (Arg64). Phosphoserine occurs at positions 67 and 75. The segment at 83–118 (EKITMQNLNDRLASYLDKVRALEQANGELEVKIRDW) is coil 1A. Residues 83-394 (EKITMQNLND…SLLEGQEAHY (312 aa)) form the IF rod domain. The tract at residues 119-136 (YQKQGPGPSRDYNHYFKT) is linker 1. The coil 1B stretch occupies residues 137–228 (IEDLRDKILG…KNHEEEITAL (92 aa)). Positions 229-251 (RSQVGGQVSVEVDSTPGVDLAKI) are linker 12. Positions 247-393 (DLAKILSEMR…RSLLEGQEAH (147 aa)) are necessary for interaction with PNN. Residues 252-390 (LSEMRSQYEI…ATYRSLLEGQ (139 aa)) are coil 2. Phosphothreonine is present on Thr326. The interval 391 to 403 (EAHYNNLPTPKAI) is rod-like helical tail. Tyr394 carries the phosphotyrosine modification.

Belongs to the intermediate filament family. Heterotetramer of two type I and two type II keratins. Interacts with PNN and the actin-binding domain of DMD.

Functionally, involved in the organization of myofibers. Together with KRT8, helps to link the contractile apparatus to dystrophin at the costameres of striated muscle. The chain is Keratin, type I cytoskeletal 19 (Krt19) from Mus musculus (Mouse).